The following is a 150-amino-acid chain: D-aminoacyl-tRNA deacylase (150 aa).

The Gly-cisPro motif, important for rejection of L-amino acids motif lies at 140–141 (GP).

Belongs to the DTD family. In terms of assembly, homodimer.

The protein resides in the cytoplasm. It catalyses the reaction glycyl-tRNA(Ala) + H2O = tRNA(Ala) + glycine + H(+). It carries out the reaction a D-aminoacyl-tRNA + H2O = a tRNA + a D-alpha-amino acid + H(+). In terms of biological role, an aminoacyl-tRNA editing enzyme that deacylates mischarged D-aminoacyl-tRNAs. Also deacylates mischarged glycyl-tRNA(Ala), protecting cells against glycine mischarging by AlaRS. Acts via tRNA-based rather than protein-based catalysis; rejects L-amino acids rather than detecting D-amino acids in the active site. By recycling D-aminoacyl-tRNA to D-amino acids and free tRNA molecules, this enzyme counteracts the toxicity associated with the formation of D-aminoacyl-tRNA entities in vivo and helps enforce protein L-homochirality. The sequence is that of D-aminoacyl-tRNA deacylase (DTD1) from Eremothecium gossypii (strain ATCC 10895 / CBS 109.51 / FGSC 9923 / NRRL Y-1056) (Yeast).